Here is a 314-residue protein sequence, read N- to C-terminus: Ornithine carbamoyltransferase (314 aa).

Carbamoyl phosphate contacts are provided by residues 58-61 (STRT), Q85, R109, and 136-139 (HPAQ). Residues N169, D233, and 237 to 238 (SM) contribute to the L-ornithine site. Carbamoyl phosphate-binding positions include 273–274 (CL) and R301.

The protein belongs to the aspartate/ornithine carbamoyltransferase superfamily. OTCase family.

The protein localises to the cytoplasm. It carries out the reaction carbamoyl phosphate + L-ornithine = L-citrulline + phosphate + H(+). Its pathway is amino-acid degradation; L-arginine degradation via ADI pathway; carbamoyl phosphate from L-arginine: step 2/2. Reversibly catalyzes the transfer of the carbamoyl group from carbamoyl phosphate (CP) to the N(epsilon) atom of ornithine (ORN) to produce L-citrulline. This chain is Ornithine carbamoyltransferase, found in Staphylothermus marinus (strain ATCC 43588 / DSM 3639 / JCM 9404 / F1).